Here is a 213-residue protein sequence, read N- to C-terminus: uncharacterized protein (213 aa).

Residues G53, E74, and D97 each contribute to the S-adenosyl-L-methionine site.

Belongs to the methyltransferase superfamily. YrrT family.

Functionally, could be a S-adenosyl-L-methionine-dependent methyltransferase. This is an uncharacterized protein from Bacillus subtilis (strain 168).